Consider the following 257-residue polypeptide: Protein YIPF5 (257 aa).

The Cytoplasmic segment spans residues 1–124 (MSGFENLNTD…KVADGSIMNE (124 aa)). The interval 75 to 106 (PASPQPFYGNNFEDEPPLLEELGINFDHIWQK) is interaction with Sec23. The chain crosses the membrane as a helical span at residues 125–145 (TDLAGPMVFCLAFGATLLLAG). Lys-146 is a topological domain (lumenal). A helical transmembrane segment spans residues 147–167 (IQFGYVYGISAIGCLGMFCLL). Residues 168–173 (NLMSMT) are Cytoplasmic-facing. A helical membrane pass occupies residues 174–194 (GVSFGCVASVLGYCLLPMILL). Residues 195–196 (SS) are Lumenal-facing. The helical transmembrane segment at 197 to 217 (FAVIFSLQGMVGIILTAGIIG) threads the bilayer. The Cytoplasmic portion of the chain corresponds to 218–236 (WCSFSASKIFISALAMEGQ). The chain crosses the membrane as a helical span at residues 237 to 257 (QLLVAYPCALLYGVFALISVF).

This sequence belongs to the YIP1 family. Interacts with the COPII coat components Sec23 (SEC23A and/or SEC23B) and Sec24 (SEC24A and/or SEC24B). Interacts with YIF1A. May interact with RAB1A. Interacts with YIPF3 and YIPF4. Ubiquitously expressed with abundant expression in pancreatic tissue, islets, beta cells, and brain. Highly expressed in coronary smooth muscles.

The protein resides in the endoplasmic reticulum membrane. It localises to the golgi apparatus. The protein localises to the cis-Golgi network membrane. It is found in the cytoplasmic vesicle. Its subcellular location is the COPII-coated vesicle. Its function is as follows. Plays a role in transport between endoplasmic reticulum and Golgi. In pancreatic beta cells, required to transport proinsulin from endoplasmic reticulum into the Golgi. This is Protein YIPF5 from Homo sapiens (Human).